Reading from the N-terminus, the 299-residue chain is ATP phosphoribosyltransferase (299 aa).

This sequence belongs to the ATP phosphoribosyltransferase family. Long subfamily. As to quaternary structure, equilibrium between an active dimeric form, an inactive hexameric form and higher aggregates. Interconversion between the various forms is largely reversible and is influenced by the natural substrates and inhibitors of the enzyme. Mg(2+) is required as a cofactor.

The protein localises to the cytoplasm. The enzyme catalyses 1-(5-phospho-beta-D-ribosyl)-ATP + diphosphate = 5-phospho-alpha-D-ribose 1-diphosphate + ATP. It participates in amino-acid biosynthesis; L-histidine biosynthesis; L-histidine from 5-phospho-alpha-D-ribose 1-diphosphate: step 1/9. Its activity is regulated as follows. Feedback inhibited by histidine. Its function is as follows. Catalyzes the condensation of ATP and 5-phosphoribose 1-diphosphate to form N'-(5'-phosphoribosyl)-ATP (PR-ATP). Has a crucial role in the pathway because the rate of histidine biosynthesis seems to be controlled primarily by regulation of HisG enzymatic activity. This chain is ATP phosphoribosyltransferase, found in Buchnera aphidicola subsp. Melaphis rhois.